The chain runs to 107 residues: Period circadian protein (107 aa).

Positions 81–107 (ITNGSNTGTGTSSGSFQPPLLTEALLN) are disordered. A compositionally biased stretch (low complexity) spans 82-95 (TNGSNTGTGTSSGS).

As to quaternary structure, forms a heterodimer with timeless (TIM); the complex then translocates into the nucleus. Post-translationally, phosphorylated with a circadian rhythmicity, probably by the double-time protein (dbt). Phosphorylation could be implicated in the stability of per monomer and in the formation of heterodimer per-tim.

The protein localises to the nucleus. Its subcellular location is the cytoplasm. The protein resides in the perinuclear region. Functionally, essential for biological clock functions. Determines the period length of circadian and ultradian rhythms; an increase in PER dosage leads to shortened circadian rhythms and a decrease leads to lengthened circadian rhythms. Essential for the circadian rhythmicity of locomotor activity, eclosion behavior, and for the rhythmic component of the male courtship song that originates in the thoracic nervous system. The biological cycle depends on the rhythmic formation and nuclear localization of the TIM-PER complex. Light induces the degradation of TIM, which promotes elimination of PER. Nuclear activity of the heterodimer coordinatively regulates PER and TIM transcription through a negative feedback loop. Behaves as a negative element in circadian transcriptional loop. Does not appear to bind DNA, suggesting indirect transcriptional inhibition. The sequence is that of Period circadian protein (per) from Beris vallata (Common orange legionnaire).